The primary structure comprises 179 residues: MSRIGKLPITVPAGVDVTIDGRTVQVKGPKGSLSHTIAAPIEIAKGEDGVLNVTRPNDERQNKALHGLSRTLVANMITGVTQGYVKKLEISGVGYRVLAKGSNLEFSLGYSHSITVEAPEGITFKVEAPTRFSVEGIDKQKVGEVAANIRKLRKPDPYKAKGVKYEGEVIRRKVGKAGK.

Belongs to the universal ribosomal protein uL6 family. Part of the 50S ribosomal subunit.

In terms of biological role, this protein binds to the 23S rRNA, and is important in its secondary structure. It is located near the subunit interface in the base of the L7/L12 stalk, and near the tRNA binding site of the peptidyltransferase center. This Streptomyces avermitilis (strain ATCC 31267 / DSM 46492 / JCM 5070 / NBRC 14893 / NCIMB 12804 / NRRL 8165 / MA-4680) protein is Large ribosomal subunit protein uL6.